The chain runs to 1538 residues: CLIP-associating protein 1 (1538 aa).

HEAT repeat units follow at residues 87 to 124 (AQIGTVLPSLIDRLGDAKDSVREQDQTLLLKIMDQAAN) and 163 to 200 (LTLSKIVPHICNLLGDPNSQVRDAAINSLVEIYRHVGE). Positions 235-292 (SANDKNFDDEDSVDGNRPSSASSTSSKAPPSSRRNVGMGTTRRLGSSTLGSKSSAAKE) are disordered. Phosphoserine is present on Ser246. Residues 251 to 268 (RPSSASSTSSKAPPSSRR) show a composition bias toward low complexity. HEAT repeat units follow at residues 405 to 440 (HGAEAIMPTIFNLIPNSAKIMATSGVVAVRLIIRHT) and 441 to 477 (HIPRLIPVITSNCTSKSVAVRRRCFEFLDLLLQEWQT). The disordered stretch occupies residues 543–783 (SDSIVSLPQS…DRFGLGQPGR (241 aa)). Phosphoserine is present on residues Ser545, Ser548, Ser558, Ser559, and Ser568. Residues 548-567 (SLPQSDRSSSSSQESLNRPL) show a composition bias toward low complexity. Over residues 574–594 (TGSTTSRASTVSTKSVSTTGS) the composition is skewed to low complexity. Ser600 is modified (phosphoserine). The span at 606–628 (AAASAKSKVSSSSGTTPFSSAAA) shows a compositional bias: low complexity. A phosphoserine mark is found at Ser636, Ser646, Ser647, and Ser649. Over residues 645 to 658 (QSSGSATNVASTPD) the composition is skewed to polar residues. Residue Thr656 is modified to Phosphothreonine. The interval 662–785 (RSRAKVVSQS…FGLGQPGRIP (124 aa)) is interaction with microtubules, MAPRE1 and MAPRE3. The segment covering 673–692 (RSRSANPAGAGSRSSSPGKL) has biased composition (low complexity). A phosphoserine mark is found at Ser684, Ser688, Ser695, and Ser705. Over residues 693 to 705 (LGSGYGGLTGGSS) the composition is skewed to gly residues. A Phosphothreonine modification is found at Thr711. Ser714 carries the post-translational modification Phosphoserine. Over residues 724 to 733 (QGCSRETSPN) the composition is skewed to polar residues. Phosphoserine is present on residues Ser787, Ser797, and Ser823. One copy of the HEAT 5 repeat lies at 974-1011 (QQFNILMRFIVDQTQTPNLKVKVAILKYIESLARQMDP). Disordered stretches follow at residues 1080–1120 (HLKN…CSHG) and 1136–1156 (AKHPPPFSQPNSIPTAPSHKA). Residues 1082–1097 (KNSSNTSVGSPSNTIG) are compositionally biased toward polar residues. Ser1091 is subject to Phosphoserine. Thr1095 and Thr1099 each carry phosphothreonine. The segment covering 1106-1115 (SRTSPLTSPT) has biased composition (low complexity). Ser1113 carries the phosphoserine modification. Residues Ser1196 and Ser1223 each carry the phosphoserine modification. The interval 1215–1238 (VSRDGGAASPATEGRGGSEVEGGR) is disordered. Residues 1254–1538 (RAFPGPRARD…SSSSDVSTHS (285 aa)) are interaction with CLIP2. The segment at 1254–1538 (RAFPGPRARD…SSSSDVSTHS (285 aa)) is interaction with PHLDB2 and RSN. The tract at residues 1256 to 1538 (FPGPRARDYN…SSSSDVSTHS (283 aa)) is localization to kinetochores. The stretch at 1299 to 1330 (DHSDLVADLLKELSNHNERVEERKGALLELLK) forms a coiled coil. 2 HEAT repeats span residues 1342 to 1379 (EHFKTILLLLLETLGDKDHSIRALALRVLREILRNQPA) and 1460 to 1497 (QLLVDIIPGLLQGYDNTESSVRKASVFCLVAIYSVIGE).

The protein belongs to the CLASP family. Interacts with CLIP2, ERC1, MAPRE1, MAPRE3, microtubules, PHLDB2 and RSN. The interaction with ERC1 may be mediated by PHLDB2. Interacts with GCC2; recruits CLASP1 to Golgi membranes. Interacts with MACF1. Interacts with mtcl2 and MTCL1.

The protein localises to the cytoplasm. Its subcellular location is the cytoskeleton. It is found in the microtubule organizing center. The protein resides in the centrosome. It localises to the chromosome. The protein localises to the centromere. Its subcellular location is the kinetochore. It is found in the spindle. The protein resides in the golgi apparatus. It localises to the trans-Golgi network. In terms of biological role, microtubule plus-end tracking protein that promotes the stabilization of dynamic microtubules. Involved in the nucleation of noncentrosomal microtubules originating from the trans-Golgi network (TGN). Required for the polarization of the cytoplasmic microtubule arrays in migrating cells towards the leading edge of the cell. May act at the cell cortex to enhance the frequency of rescue of depolymerizing microtubules by attaching their plus-ends to cortical platforms composed of ERC1 and PHLDB2. This cortical microtubule stabilizing activity is regulated at least in part by phosphatidylinositol 3-kinase signaling. Also performs a similar stabilizing function at the kinetochore which is essential for the bipolar alignment of chromosomes on the mitotic spindle. The protein is CLIP-associating protein 1 (CLASP1) of Homo sapiens (Human).